The sequence spans 423 residues: Osteomodulin (423 aa).

Residues 1–20 (MGCLRPIYVLFFCFVVRVYG) form the signal peptide. A sulfotyrosine mark is found at tyrosine 22, tyrosine 25, tyrosine 31, tyrosine 39, tyrosine 51, and tyrosine 77. In terms of domain architecture, LRRNT spans 53 to 91 (APFYQNILGCAKECFCPTNFPTSMYCDNRKLKTIPDIPM). LRR repeat units follow at residues 92-113 (HIQQLNLQFNDIEAVTADSFIN), 116-129 (HLKEINLSHNKIKS), 142-164 (NLQQLHLDHNNLEEFPFPLPKSL), 165-184 (ERLLLGYNEISTLPTHAMDG), 187-207 (NVTMLDLCYNHLSDSTLKGKI), 213-233 (KLMQLNLCNNRLESMPPGLPL), 234-255 (SLMYLSLENNSISSIPEDYFQK), 258-279 (KLHALRISHNKLEDIPYDIFNL), 281-294 (NLIELNVGHNKLKQ), 301-322 (NLEHLYLQNNEIQSINVTMMCP), and 331-353 (HLTYLRVDQNKLKEPISSYIFFC). Asparagine 113 and asparagine 121 each carry an N-linked (GlcNAc...) asparagine glycan. N-linked (GlcNAc...) asparagine glycosylation is present at asparagine 187. 2 N-linked (GlcNAc...) asparagine glycosylation sites follow: asparagine 242 and asparagine 278. Residue asparagine 316 is glycosylated (N-linked (GlcNAc...) asparagine). A disulfide bridge links cysteine 321 with cysteine 353. Residues 383–408 (YQDEEEEEEDDSQDHTLEGQEETEEH) form a disordered region. Residues 385–394 (DEEEEEEDDS) are compositionally biased toward acidic residues. 2 positions are modified to sulfotyrosine: tyrosine 413 and tyrosine 414.

Belongs to the small leucine-rich proteoglycan (SLRP) family. SLRP class II subfamily. As to quaternary structure, binds the alpha(V)beta(3)-integrin. In terms of processing, glycosylated; contains keratan sulfate. As to expression, osteoblast and odontoblast. Expressed in femoral bone and calvaria tissues. Detected in femoral head, rib, tendon and bone marrow.

It localises to the secreted. Its subcellular location is the extracellular space. It is found in the extracellular matrix. May be implicated in biomineralization processes. Has a function in binding of osteoblasts via the alpha(V)beta(3)-integrin. This Rattus norvegicus (Rat) protein is Osteomodulin (Omd).